Reading from the N-terminus, the 544-residue chain is MTARTLSLMASLVAYDDSDSEAETEHAGSFNATGQQKDTSGVARPPGQDFASGTLDVPKAGAQPTKHGSCEDPGGYRLPLAQLGRSDWGSCPSQRLQWPGKEPQVTFPIKEPSCSSLWTSHVPASHMPLAAARFKQVKLSRNFPKSSFHAQSESETVGKNGSSFQKKKCEDCVVPYTPRRLRQRQALSTETGKGKDVEPQGPPAGRAPAPLYVGPGVSEFIQPYLNSHYKETTVPRKVLFHLRGHRGPVNTIQWCPVLSKSHMLLSTSMDKTFKVWNAVDSGHCLQTYSLHTEAVRAARWAPCGRRILSGGFDFALHLTDLETGTQLFSGRSDFRITTLKFHPKDHNIFLCGGFSSEMKAWDIRTGKVMRSYKATIQQTLDILFLREGSEFLSSTDASTRDSADRTIIAWDFRTSAKISNQIFHERFTCPSLALHPREPVFLAQTNGNYLALFSTVWPYRMSRRRRYEGHKVEGYSVGCECSPGGDLLVTGSADGRVLMYSFRTASRACTLQGHTQACVGTTYHPVLPSVLATCSWGGDMKIWH.

2 disordered regions span residues 17–74 (DSDS…EDPG) and 183–208 (QRQALSTETGKGKDVEPQGPPAGRAP). Residues 30 to 39 (FNATGQQKDT) are compositionally biased toward polar residues. 7 WD repeats span residues 244–286 (GHRG…HCLQ), 290–329 (LHTEAVRAARWAPCGRRILSGGFDFALHLTDLETGTQLFS), 330–373 (GRSD…RSYK), 375–420 (TIQQ…KISN), 424–463 (HERFTCPSLALHPREPVFLAQTNGNYLALFSTVWPYRMSR), 469–510 (GHKV…RACT), and 513–544 (GHTQACVGTTYHPVLPSVLATCSWGGDMKIWH).

As to expression, expressed in heart, muscle, testis, ovary, uterus and prostate.

The chain is WD repeat-containing protein 25 from Homo sapiens (Human).